The primary structure comprises 363 residues: NAD(P)H-quinone oxidoreductase subunit 1, chloroplastic (363 aa).

The next 6 membrane-spanning stretches (helical) occupy residues 30 to 50, 98 to 118, 129 to 149, 248 to 268, 300 to 320, and 343 to 363; these read LVPI…IVWL, FSIG…VIPF, IGIF…LMSG, YSGI…LLSS, IIGT…FLFI, and FLLP…LLSL.

Belongs to the complex I subunit 1 family. In terms of assembly, NDH is composed of at least 16 different subunits, 5 of which are encoded in the nucleus.

It is found in the plastid. The protein localises to the chloroplast thylakoid membrane. It catalyses the reaction a plastoquinone + NADH + (n+1) H(+)(in) = a plastoquinol + NAD(+) + n H(+)(out). The enzyme catalyses a plastoquinone + NADPH + (n+1) H(+)(in) = a plastoquinol + NADP(+) + n H(+)(out). Its function is as follows. NDH shuttles electrons from NAD(P)H:plastoquinone, via FMN and iron-sulfur (Fe-S) centers, to quinones in the photosynthetic chain and possibly in a chloroplast respiratory chain. The immediate electron acceptor for the enzyme in this species is believed to be plastoquinone. Couples the redox reaction to proton translocation, and thus conserves the redox energy in a proton gradient. The sequence is that of NAD(P)H-quinone oxidoreductase subunit 1, chloroplastic from Gossypium hirsutum (Upland cotton).